The following is a 147-amino-acid chain: 3-hydroxyacyl-[acyl-carrier-protein] dehydratase FabZ (147 aa).

Residue H51 is part of the active site.

Belongs to the thioester dehydratase family. FabZ subfamily.

Its subcellular location is the cytoplasm. It carries out the reaction a (3R)-hydroxyacyl-[ACP] = a (2E)-enoyl-[ACP] + H2O. Its function is as follows. Involved in unsaturated fatty acids biosynthesis. Catalyzes the dehydration of short chain beta-hydroxyacyl-ACPs and long chain saturated and unsaturated beta-hydroxyacyl-ACPs. The sequence is that of 3-hydroxyacyl-[acyl-carrier-protein] dehydratase FabZ from Anaplasma marginale (strain Florida).